Here is a 159-residue protein sequence, read N- to C-terminus: Large ribosomal subunit protein uL30 (159 aa).

Belongs to the universal ribosomal protein uL30 family. As to quaternary structure, part of the 50S ribosomal subunit.

The sequence is that of Large ribosomal subunit protein uL30 from Aeropyrum pernix (strain ATCC 700893 / DSM 11879 / JCM 9820 / NBRC 100138 / K1).